Consider the following 314-residue polypeptide: Porphobilinogen deaminase (314 aa).

Cysteine 241 is subject to S-(dipyrrolylmethanemethyl)cysteine.

This sequence belongs to the HMBS family. Monomer. Dipyrromethane is required as a cofactor.

It catalyses the reaction 4 porphobilinogen + H2O = hydroxymethylbilane + 4 NH4(+). The protein operates within porphyrin-containing compound metabolism; protoporphyrin-IX biosynthesis; coproporphyrinogen-III from 5-aminolevulinate: step 2/4. It functions in the pathway porphyrin-containing compound metabolism; chlorophyll biosynthesis. Functionally, tetrapolymerization of the monopyrrole PBG into the hydroxymethylbilane pre-uroporphyrinogen in several discrete steps. In Chloroherpeton thalassium (strain ATCC 35110 / GB-78), this protein is Porphobilinogen deaminase.